Here is a 178-residue protein sequence, read N- to C-terminus: Large ribosomal subunit protein uL6 (178 aa).

This sequence belongs to the universal ribosomal protein uL6 family. In terms of assembly, part of the 50S ribosomal subunit.

This protein binds to the 23S rRNA, and is important in its secondary structure. It is located near the subunit interface in the base of the L7/L12 stalk, and near the tRNA binding site of the peptidyltransferase center. This chain is Large ribosomal subunit protein uL6, found in Symbiobacterium thermophilum (strain DSM 24528 / JCM 14929 / IAM 14863 / T).